The chain runs to 481 residues: Proline--tRNA ligase (481 aa).

This sequence belongs to the class-II aminoacyl-tRNA synthetase family. ProS type 3 subfamily. In terms of assembly, homodimer.

It is found in the cytoplasm. The enzyme catalyses tRNA(Pro) + L-proline + ATP = L-prolyl-tRNA(Pro) + AMP + diphosphate. Catalyzes the attachment of proline to tRNA(Pro) in a two-step reaction: proline is first activated by ATP to form Pro-AMP and then transferred to the acceptor end of tRNA(Pro). This chain is Proline--tRNA ligase, found in Prosthecochloris aestuarii (strain DSM 271 / SK 413).